The chain runs to 248 residues: MATTLSRDQYVYMAKLAEQAERYEEMVQFMEQLVSGATPAGELTVEERNLLSVAYKNVIGSLRAAWRIVSSIEQKEESRKNEEHVSLVKDYRSKVETELSSICSGILRLLDSHLIPSATASESKVFYLKMKGDYHRYLAEFKSGDERKTAAEDTMIAYKAAQDVAVADLAPTHPIRLGLALNFSVFYYEILNSSEKACSMAKQAFEEAIAELDTLGEESYKDSTLIMQLLRDNLTLWTSDMQEQMDEA.

Phosphoserine occurs at positions 70, 112, and 193. T214 carries the post-translational modification Phosphothreonine.

It belongs to the 14-3-3 family. Interacts with the isocitrate dehydrogenase IDH3, and malate dehydrogenases MDH1 and MDH2. Interacts with CINV1.

The protein localises to the nucleus. It localises to the cytoplasm. Is associated with a DNA binding complex that binds to the G box, a well-characterized cis-acting DNA regulatory element found in plant genes. Involved in the regulation of nutrient metabolism. Negative regulator of freezing tolerance that modulates cold-responsive C-repeat-binding factors (CBF) DREB1A AND DREB1B proteins stability by facilitating their ubiquitin-mediated degradation; this processus is counteracted by B1L. This Arabidopsis thaliana (Mouse-ear cress) protein is 14-3-3-like protein G-BOX factor 14 kappa.